Here is a 509-residue protein sequence, read N- to C-terminus: Pyruvate kinase (509 aa).

The residue at position 29 (S29) is a Phosphoserine. R56 is a substrate binding site. The K(+) site is built by N58 and S60. 58 to 61 (NFSH) contributes to the ATP binding site. A Phosphoserine modification is found at S63. The K(+) site is built by D91 and T92. 2 residues coordinate ATP: R98 and K184. E249 provides a ligand contact to Mg(2+). Residues G272 and D273 each contribute to the substrate site. Residue D273 participates in Mg(2+) binding. At S281 the chain carries Phosphoserine. T305 is a binding site for substrate. A Phosphoserine modification is found at S412.

It belongs to the pyruvate kinase family. Homotetramer. It depends on Mg(2+) as a cofactor. The cofactor is K(+).

The enzyme catalyses pyruvate + ATP = phosphoenolpyruvate + ADP + H(+). Its pathway is carbohydrate degradation; glycolysis; pyruvate from D-glyceraldehyde 3-phosphate: step 5/5. The chain is Pyruvate kinase (pyk1) from Schizosaccharomyces pombe (strain 972 / ATCC 24843) (Fission yeast).